The sequence spans 821 residues: G-type lectin S-receptor-like serine/threonine-protein kinase SD2-5 (821 aa).

Positions 1 to 21 (MRGVFIVIVTCLVFLPDPLRA) are cleaved as a signal peptide. At 22–429 (GVASIGSITP…NGEDDGKHFP (408 aa)) the chain is on the extracellular side. The 116-residue stretch at 33-148 (FGGSQMNYIN…DGTSIWESFD (116 aa)) folds into the Bulb-type lectin domain. N-linked (GlcNAc...) asparagine glycosylation is found at Asn51, Asn121, Asn174, and Asn248. The EGF-like; atypical domain maps to 280 to 314 (PSDLCGTPEPCGPYYVCSGSKVCGCVSGLSRARSD). 2 cysteine pairs are disulfide-bonded: Cys284–Cys296 and Cys290–Cys302. Residues 323–411 (CKKTKDNATL…SGFVSYIKIA (89 aa)) form the PAN domain. Residues Asn329, Asn370, and Asn380 are each glycosylated (N-linked (GlcNAc...) asparagine). Cystine bridges form between Cys363-Cys385 and Cys367-Cys373. Residues 430-450 (YVVIIVVVTVFIIAVLIFVAF) form a helical membrane-spanning segment. Topologically, residues 451-821 (RIHKRKKMIL…LSAVRLSGPR (371 aa)) are cytoplasmic. Positions 493-768 (NNFSVKLGQG…KVVQMLEGVF (276 aa)) constitute a Protein kinase domain. ATP is bound by residues 499 to 507 (LGQGGFGSV) and Lys521. Residues 581-599 (KDGDVLLDWDTRFNIALGT) are caM-binding. Catalysis depends on Asp618, which acts as the Proton acceptor. Position 635 is a phosphoserine (Ser635). The residue at position 652 (Thr652) is a Phosphothreonine.

Belongs to the protein kinase superfamily. Ser/Thr protein kinase family. As to quaternary structure, interacts with PUB9, PUB13, PUB14 and PUB29.

It localises to the membrane. It catalyses the reaction L-seryl-[protein] + ATP = O-phospho-L-seryl-[protein] + ADP + H(+). The enzyme catalyses L-threonyl-[protein] + ATP = O-phospho-L-threonyl-[protein] + ADP + H(+). This Arabidopsis thaliana (Mouse-ear cress) protein is G-type lectin S-receptor-like serine/threonine-protein kinase SD2-5 (SD25).